A 599-amino-acid polypeptide reads, in one-letter code: Aspartate--tRNA ligase (599 aa).

Glu-180 is an L-aspartate binding site. Positions 204-207 (QIFK) are aspartate. Arg-226 contributes to the L-aspartate binding site. Residues 226–228 (RDE) and Gln-235 contribute to the ATP site. L-aspartate is bound at residue His-454. Residue Glu-488 participates in ATP binding. Arg-495 serves as a coordination point for L-aspartate. 540 to 543 (GLDR) serves as a coordination point for ATP.

It belongs to the class-II aminoacyl-tRNA synthetase family. Type 1 subfamily. As to quaternary structure, homodimer.

The protein localises to the cytoplasm. It carries out the reaction tRNA(Asp) + L-aspartate + ATP = L-aspartyl-tRNA(Asp) + AMP + diphosphate. Catalyzes the attachment of L-aspartate to tRNA(Asp) in a two-step reaction: L-aspartate is first activated by ATP to form Asp-AMP and then transferred to the acceptor end of tRNA(Asp). The protein is Aspartate--tRNA ligase of Clostridium botulinum (strain Eklund 17B / Type B).